We begin with the raw amino-acid sequence, 642 residues long: Threonine--tRNA ligase (642 aa).

The 61-residue stretch at 1 to 61 (MPVITLPDGS…ETDAELSIIT (61 aa)) folds into the TGS domain. Residues 243 to 534 (DHRKIGKQLD…LIEEYAGRFP (292 aa)) form a catalytic region. Positions 334, 385, and 511 each coordinate Zn(2+).

This sequence belongs to the class-II aminoacyl-tRNA synthetase family. As to quaternary structure, homodimer. It depends on Zn(2+) as a cofactor.

The protein resides in the cytoplasm. The enzyme catalyses tRNA(Thr) + L-threonine + ATP = L-threonyl-tRNA(Thr) + AMP + diphosphate + H(+). In terms of biological role, catalyzes the attachment of threonine to tRNA(Thr) in a two-step reaction: L-threonine is first activated by ATP to form Thr-AMP and then transferred to the acceptor end of tRNA(Thr). Also edits incorrectly charged L-seryl-tRNA(Thr). The protein is Threonine--tRNA ligase of Shewanella sp. (strain ANA-3).